We begin with the raw amino-acid sequence, 201 residues long: Peptide deformylase 2 (201 aa).

2 residues coordinate Fe cation: cysteine 121 and histidine 163. Residue glutamate 164 is part of the active site. Position 167 (histidine 167) interacts with Fe cation.

It belongs to the polypeptide deformylase family. The cofactor is Fe(2+).

It carries out the reaction N-terminal N-formyl-L-methionyl-[peptide] + H2O = N-terminal L-methionyl-[peptide] + formate. Functionally, removes the formyl group from the N-terminal Met of newly synthesized proteins. Requires at least a dipeptide for an efficient rate of reaction. N-terminal L-methionine is a prerequisite for activity but the enzyme has broad specificity at other positions. The chain is Peptide deformylase 2 from Prochlorococcus marinus (strain MIT 9313).